Consider the following 778-residue polypeptide: Endonuclease MutS2 (778 aa).

Residue 328–335 (GPNTGGKT) participates in ATP binding. A Smr domain is found at 702 to 777 (LDLRGKRYEE…GSGATIVTFK (76 aa)).

Belongs to the DNA mismatch repair MutS family. MutS2 subfamily. Homodimer. Binds to stalled ribosomes, contacting rRNA.

Functionally, endonuclease that is involved in the suppression of homologous recombination and thus may have a key role in the control of bacterial genetic diversity. Its function is as follows. Acts as a ribosome collision sensor, splitting the ribosome into its 2 subunits. Detects stalled/collided 70S ribosomes which it binds and splits by an ATP-hydrolysis driven conformational change. Acts upstream of the ribosome quality control system (RQC), a ribosome-associated complex that mediates the extraction of incompletely synthesized nascent chains from stalled ribosomes and their subsequent degradation. Probably generates substrates for RQC. The protein is Endonuclease MutS2 of Streptococcus pneumoniae (strain Taiwan19F-14).